We begin with the raw amino-acid sequence, 45 residues long: uncharacterized protein (45 aa).

This is an uncharacterized protein from Dictyostelium discoideum (Social amoeba).